The primary structure comprises 515 residues: Monocarboxylate transporter 10 (515 aa).

A disordered region spans residues 1–48 (MVLSQEEPDSARGTSEAQPLGPAPTGAAPPPGPGPSDSPEAAVEKVEV). Residues 1–66 (MVLSQEEPDS…EPHEPPEPPE (66 aa)) are Cytoplasmic-facing. Low complexity predominate over residues 17 to 26 (AQPLGPAPTG). Pro residues predominate over residues 27-36 (AAPPPGPGPS). A helical membrane pass occupies residues 67–87 (GGWGWLVMLAAMWCNGSVFGI). The Extracellular portion of the chain corresponds to 88–114 (QNACGVLFVSMLETFGSKDDDKMVFKT). The chain crosses the membrane as a helical span at residues 115–135 (AWVGSLSMGMIFFCCPIVSVF). At 136-144 (TDLFGCRKT) the chain is on the cytoplasmic side. The helical transmembrane segment at 145–165 (AVVGAAVGFVGLMSSSFVSSI) threads the bilayer. Topologically, residues 166-171 (EPLYLT) are extracellular. A helical transmembrane segment spans residues 172-192 (YGIIFACGCSFAYQPSLVILG). At 193-200 (HYFKKRLG) the chain is on the cytoplasmic side. The helical transmembrane segment at 201 to 221 (LVNGIVTAGSSVFTILLPLLL) threads the bilayer. Residues 222–228 (RVLIDSV) lie on the Extracellular side of the membrane. Residues 229–249 (GLFYTLRVLCIFMFVLFLAGF) traverse the membrane as a helical segment. Residues 250–291 (TYRPLATSTKDKESGGSGSSLFSRKKFSPPKKIFNFAIFKVT) lie on the Cytoplasmic side of the membrane. Residue S263 is modified to Phosphoserine. Residues 292-312 (AYAVWAVGIPLALFGYFVPYV) form a helical membrane-spanning segment. Residues 313-329 (HLMKHVNERFQDEKNKE) lie on the Extracellular side of the membrane. Residues 330-350 (VVLMCIGVTSGVGRLLFGRIA) traverse the membrane as a helical segment. Position 351 (D351) is a topological domain, cytoplasmic. The chain crosses the membrane as a helical span at residues 352–372 (YVPGVKKVYLQVLSFFFIGLM). The Extracellular portion of the chain corresponds to 373–396 (SMMIPLCSIFGALIAVCLIMGLFD). Residues 397–417 (GCFISIMAPIAFELVGAQDVS) form a helical membrane-spanning segment. The Cytoplasmic segment spans residues 418 to 419 (QA). Residues 420–440 (IGFLLGFMSIPMTVGPPIAGL) traverse the membrane as a helical segment. At 441 to 451 (LRDKLGSYDVA) the chain is on the extracellular side. A helical transmembrane segment spans residues 452–472 (FYLAGVPPLIGGAVLCFIPWI). Over 473 to 515 (HSKKQREISKTTGKEKMEKMLENQNSLLSSSSGMFKKESDSII) the chain is Cytoplasmic. A phosphoserine mark is found at S498, S501, S503, and S504.

The protein belongs to the major facilitator superfamily. Monocarboxylate porter (TC 2.A.1.13) family. In terms of processing, not N-glycosylated. In terms of tissue distribution, strongly expressed in kidney and skeletal muscle and at lower level in placenta and heart.

It localises to the cell membrane. It is found in the basolateral cell membrane. It carries out the reaction 3,3',5-triiodo-L-thyronine(out) = 3,3',5-triiodo-L-thyronine(in). The enzyme catalyses L-thyroxine(out) = L-thyroxine(in). It catalyses the reaction L-tryptophan(in) = L-tryptophan(out). The catalysed reaction is L-tyrosine(in) = L-tyrosine(out). It carries out the reaction L-phenylalanine(in) = L-phenylalanine(out). Its function is as follows. Sodium- and proton-independent thyroid hormones and aromatic acids transporter. Mediates both uptake and efflux of 3,5,3'-triiodothyronine (T3) and 3,5,3',5'-tetraiodothyronine (T4) with high affinity, suggesting a role in the homeostasis of thyroid hormone levels. Responsible for low affinity bidirectional transport of the aromatic amino acids, such as phenylalanine, tyrosine, tryptophan and L-3,4-dihydroxyphenylalanine (L-dopa). Plays an important role in homeostasis of aromatic amino acids. This Homo sapiens (Human) protein is Monocarboxylate transporter 10 (SLC16A10).